A 601-amino-acid polypeptide reads, in one-letter code: UvrABC system protein C (601 aa).

One can recognise a GIY-YIG domain in the interval 17–95 (TLPGVYRMLD…IKALAPRYNI (79 aa)). The 36-residue stretch at 204-239 (SELINELTRRMTAAAEAMAFEQAAELRDQIQALARV) folds into the UVR domain.

This sequence belongs to the UvrC family. As to quaternary structure, interacts with UvrB in an incision complex.

The protein localises to the cytoplasm. Functionally, the UvrABC repair system catalyzes the recognition and processing of DNA lesions. UvrC both incises the 5' and 3' sides of the lesion. The N-terminal half is responsible for the 3' incision and the C-terminal half is responsible for the 5' incision. The sequence is that of UvrABC system protein C from Chromobacterium violaceum (strain ATCC 12472 / DSM 30191 / JCM 1249 / CCUG 213 / NBRC 12614 / NCIMB 9131 / NCTC 9757 / MK).